Here is a 511-residue protein sequence, read N- to C-terminus: Cytochrome P450 4B1 (511 aa).

Heme is bound at residue glutamate 315. Residue serine 436 is modified to Phosphoserine. A heme-binding site is contributed by cysteine 453.

Belongs to the cytochrome P450 family. Heme is required as a cofactor. Detected in the liver and lung (at protein level).

Its subcellular location is the endoplasmic reticulum membrane. It localises to the microsome membrane. It carries out the reaction an organic molecule + reduced [NADPH--hemoprotein reductase] + O2 = an alcohol + oxidized [NADPH--hemoprotein reductase] + H2O + H(+). In terms of biological role, cytochromes P450 are a group of heme-thiolate monooxygenases. In liver microsomes, this enzyme is involved in an NADPH-dependent electron transport pathway. It oxidizes a variety of structurally unrelated compounds, including steroids, fatty acids, and xenobiotics. This is Cytochrome P450 4B1 (CYP4B1) from Homo sapiens (Human).